Reading from the N-terminus, the 248-residue chain is MLLCSLTLTLLWMVASGLECDVKEVCLGSPGIPGTPGSHGLPGRDGRDGIKGDPGPPGPMGPPGGMPGLPGRDGMTGAPGLPGERGEKGEPGERGPPGFPAYLDEELQGTLHEIRHQVLQSQGVLRLQGSVLAVGEKVFSTNGQSVNFDAIKELCARVGGHIAAPRSPEENEAIVSIVKKYNTYAYLGLVEGPTAGDFYYLDGAPVNYTNWYPGEPRGRGKEKCVEIYTDGQWNDKNCLQYRLAICEF.

The first 20 residues, 1–20 (MLLCSLTLTLLWMVASGLEC), serve as a signal peptide directing secretion. The Collagen-like domain maps to 28-100 (GSPGIPGTPG…PGERGPPGFP (73 aa)). Residues 29–102 (SPGIPGTPGS…ERGPPGFPAY (74 aa)) are disordered. 9 positions are modified to 4-hydroxyproline: P30, P33, P36, P42, P54, P57, P63, P67, and P70. Basic and acidic residues predominate over residues 42 to 51 (PGRDGRDGIK). Residues 54 to 65 (PGPPGPMGPPGG) are compositionally biased toward pro residues. Positions 69–82 (LPGRDGMTGAPGLP) are enriched in low complexity. The segment covering 84–93 (ERGEKGEPGE) has biased composition (basic and acidic residues). The region spanning 132–248 (LAVGEKVFST…LQYRLAICEF (117 aa)) is the C-type lectin domain. Disulfide bonds link C155/C246 and C224/C238. The N-linked (GlcNAc...) asparagine glycan is linked to N207. 4 residues coordinate Ca(2+): E215, R217, N234, and D235.

It belongs to the SFTPA family. In terms of assembly, oligomeric complex of 6 set of homotrimers.

The protein localises to the secreted. It localises to the extracellular space. It is found in the extracellular matrix. Its subcellular location is the surface film. Its function is as follows. In presence of calcium ions, it binds to surfactant phospholipids and contributes to lower the surface tension at the air-liquid interface in the alveoli of the mammalian lung and is essential for normal respiration. Enhances the expression of MYO18A/SP-R210 on alveolar macrophages. In Bos taurus (Bovine), this protein is Pulmonary surfactant-associated protein A (SFTPA1).